Reading from the N-terminus, the 500-residue chain is Flt3-interacting zinc finger protein 1 (500 aa).

M1 carries the post-translational modification N-acetylmethionine. The segment at 1–24 is disordered; that stretch reads MEDSSLPVVPAPIAAPGPAPSATA. The segment covering 9–19 has biased composition (pro residues); it reads VPAPIAAPGPA. 6 consecutive C2H2-type zinc fingers follow at residues 29–51, 57–79, 85–107, 113–136, 204–226, and 232–254; these read FHCS…FARH, HACP…LRSH, YRCS…QVVH, YCCL…KRQH, FACG…WAAH, and FKCP…KLTH. 2 disordered regions span residues 255–284 and 306–328; these read DLQG…ASEV and KLEA…AAAE. Residues 256-267 are compositionally biased toward polar residues; it reads LQGSNAPPTQVW. C2H2-type zinc fingers lie at residues 336–357, 363–386, 418–440, 446–468, and 474–496; these read YQCD…LEAH, YGCG…RASH, FGCS…VLVH, FPCL…RLLH, and FPCH…LKLH. The tract at residues 383 to 415 is disordered; it reads RASHGEGSGEAAPDGEGNQAAGGPGPGSSSRSK.

As to quaternary structure, interacts with FLT3 cytoplasmic catalytic domain, following receptor stimulation, in a kinase-independent manner. Does not interact with other structurally related receptor tyrosine kinases, including KIT, CSF1R and PDGFR. Interacts with NRL. Widely expressed. In the retina, highest expression in the ganglion cell layer.

The protein localises to the cytoplasm. It localises to the nucleus. Its function is as follows. May be a transcriptional repressor of NRL function in photoreceptors. Does not repress CRX-mediated transactivation. This Mus musculus (Mouse) protein is Flt3-interacting zinc finger protein 1 (Fiz1).